A 473-amino-acid chain; its full sequence is H(+)/Cl(-) exchange transporter ClcA (473 aa).

Residues 1 to 32 lie on the Cytoplasmic side of the membrane; that stretch reads MKTDTSTFLAQQIVRLRRRDQIRRLMQRDKTP. The helical transmembrane segment at 33–69 threads the bilayer; sequence LAILFMAAVVGTLTGLVGVAFEKAVSWVQNMRIGALV. The Periplasmic segment spans residues 70–76; the sequence is QVADHAF. The helical transmembrane segment at 77 to 100 threads the bilayer; the sequence is LLWPLAFILSALLAMVGYFLVRKF. A Selectivity filter part_1 motif is present at residues 106–110; the sequence is GSGIP. Ser-107 contacts chloride. Positions 109–116 form an intramembrane region, helical; sequence IPEIEGAL. The Cytoplasmic segment spans residues 117–123; it reads EELRPVR. Transmembrane regions (helical) follow at residues 124-141 and 148-166; these read WWRV…TLGA and EGPT…LDVF. Positions 146-150 match the Selectivity filter part_2 motif; the sequence is GREGP. Over 167–176 the chain is Cytoplasmic; sequence RMRSAEARHT. 2 intramembrane regions (helical) span residues 177–189 and 193–201; these read LLAT…LSAA and PLAGILFII. Residues 202 to 214 are Cytoplasmic-facing; it reads EEMRPQFRYNLIS. A helical transmembrane segment spans residues 215–232; sequence IKAVFTGVIMSSIVFRIF. The Periplasmic segment spans residues 233–252; it reads NGEAPIIEVGKLSDAPVNTL. A helical membrane pass occupies residues 253 to 281; it reads WLYLILGIIFGCVGPVFNSLVLRTQDMFQ. The Cytoplasmic segment spans residues 282-287; the sequence is RFHGGE. Residues 288 to 309 form a helical membrane-spanning segment; sequence IKKWVLMGGAIGGLCGILGLIE. Residues 310–329 lie on the Periplasmic side of the membrane; the sequence is PEAAGGGFNLIPIAAAGNFS. 2 consecutive transmembrane segments (helical) span residues 330 to 349 and 355 to 376; these read VGLL…LCFS and GIFA…MAAA. A Selectivity filter part_3 motif is present at residues 355–359; the sequence is GIFAP. Chloride is bound by residues Ile-356 and Phe-357. At 377-386 the chain is on the periplasmic side; sequence VLFPQYHLEA. The helical intramembrane region spans 387 to 401; sequence GTFAIAGMGALMAAS. Positions 402 to 404 form an intramembrane region, note=Loop between two helices; it reads VRA. The helical intramembrane region spans 405-416; that stretch reads PLTGIVLVLEMT. The segment at residues 417–421 is an intramembrane region (note=Loop between two helices); the sequence is DNYQL. The chain crosses the membrane as a helical span at residues 422-438; that stretch reads ILPMIITCLGATLLAQF. At 439 to 473 the chain is on the cytoplasmic side; that stretch reads LGGKPLYSTILARTLAKQDAEQAAKSQNAPAGENT. Residue Tyr-445 participates in chloride binding.

It belongs to the chloride channel (TC 2.A.49) family. ClcA subfamily. Homodimer.

Its subcellular location is the cell inner membrane. The enzyme catalyses 2 chloride(in) + H(+)(out) = 2 chloride(out) + H(+)(in). Its function is as follows. Proton-coupled chloride transporter. Functions as antiport system and exchanges two chloride ions for 1 proton. Probably acts as an electrical shunt for an outwardly-directed proton pump that is linked to amino acid decarboxylation, as part of the extreme acid resistance (XAR) response. This Salmonella gallinarum (strain 287/91 / NCTC 13346) protein is H(+)/Cl(-) exchange transporter ClcA.